The chain runs to 519 residues: Pleckstrin homology domain-containing family A member 8 (519 aa).

Positions 1–93 constitute a PH domain; it reads MEGVLYKWTN…WLVALGSAKA (93 aa). At T139 the chain carries Phosphothreonine. A Phosphoserine modification is found at S145. At T153 the chain carries Phosphothreonine. The glycolipid transfer protein homology domain stretch occupies residues 310–519; sequence TFFSTMNTSF…VHGLESDEVV (210 aa).

Homodimer. Interacts with ARF1; the interaction together with phosphatidylinositol 4-phosphate binding is required for FAPP2 GlcCer transfer ability. In terms of tissue distribution, expressed in kidney cell lines.

It is found in the golgi apparatus. The protein resides in the trans-Golgi network membrane. It localises to the membrane. Its function is as follows. Cargo transport protein that is required for apical transport from the Golgi complex. Transports AQP2 from the trans-Golgi network (TGN) to sites of AQP2 phosphorylation. Mediates the non-vesicular transport of glucosylceramide (GlcCer) from the trans-Golgi network (TGN) to the plasma membrane and plays a pivotal role in the synthesis of complex glycosphingolipids. Binding of both phosphatidylinositol 4-phosphate (PIP) and ARF1 are essential for the GlcCer transfer ability. Also required for primary cilium formation, possibly by being involved in the transport of raft lipids to the apical membrane, and for membrane tubulation. This chain is Pleckstrin homology domain-containing family A member 8 (PLEKHA8), found in Homo sapiens (Human).